The chain runs to 83 residues: CLAVATA3/ESR (CLE)-related protein 3 (83 aa).

Residues Met-1 to Cys-24 form the signal peptide. Residues Arg-38 to Glu-58 adopt a coiled-coil conformation. A disordered region spans residues Met-53–His-83. Residues Pro-75 and Pro-78 each carry the hydroxyproline modification. O-linked (Ara...) hydroxyproline glycosylation is present at Pro-78.

This sequence belongs to the CLV3/ESR signal peptide family. In terms of processing, the O-glycosylation (arabinosylation) of the hydroxyproline Pro-78 enhances binding affinity of the CLE3p peptide for its receptor. Mostly expressed in roots, stems and apex, and, to a lower extent, in seedlings, leaves, flowers, siliques and pollen.

Its subcellular location is the secreted. The protein resides in the extracellular space. In terms of biological role, extracellular signal peptide that regulates cell fate. In Arabidopsis thaliana (Mouse-ear cress), this protein is CLAVATA3/ESR (CLE)-related protein 3.